Reading from the N-terminus, the 145-residue chain is Hydrophobin-like protein 1 (145 aa).

The N-terminal stretch at 1–20 (MYLLQISISLLLLISTAATA) is a signal peptide. Asn-36 is a glycosylation site (N-linked (GlcNAc...) asparagine). Cystine bridges form between Cys-61/Cys-121, Cys-71/Cys-113, Cys-72/Cys-104, and Cys-122/Cys-139.

The protein resides in the secreted. The protein localises to the cell wall. Aerial growth, conidiation, and dispersal of filamentous fungi in the environment rely upon a capability of their secreting small amphipathic proteins called hydrophobins (HPBs) with low sequence identity. Class I can self-assemble into an outermost layer of rodlet bundles on aerial cell surfaces, conferring cellular hydrophobicity that supports fungal growth, development and dispersal; whereas Class II form highly ordered films at water-air interfaces through intermolecular interactions but contribute nothing to the rodlet structure. In Botryotinia fuckeliana, hydrophobins are not involved in conferring surface hydrophobicity to conidia and aerial hyphae and their function in sclerotia and fruiting bodies remains to be investigated. This is Hydrophobin-like protein 1 from Botryotinia fuckeliana (strain B05.10) (Noble rot fungus).